The chain runs to 518 residues: Probable carboxypeptidase 2 (518 aa).

The signal sequence occupies residues 1–21; sequence MVAYHLLTLISLGLGSHCASA. N46 carries N-linked (GlcNAc...) asparagine glycosylation. The segment at 53-76 is disordered; the sequence is PAFTSPGTVPRGFSDGTSGPTRDE. Positions 71–351 constitute a Peptidase M14 domain; that stretch reads GPTRDETMEG…VMAKSILQTA (281 aa). N116 carries an N-linked (GlcNAc...) asparagine glycan. Zn(2+) contacts are provided by H136, E139, and H224. Residue E322 is the Proton donor/acceptor of the active site. N393 and N459 each carry an N-linked (GlcNAc...) asparagine glycan.

It belongs to the peptidase M14 family. Zn(2+) is required as a cofactor.

It localises to the secreted. In terms of biological role, extracellular metalloprotease that contributes to pathogenicity. The polypeptide is Probable carboxypeptidase 2 (MCPB) (Trichophyton verrucosum (strain HKI 0517)).